The primary structure comprises 625 residues: Sorting nexin-41 (625 aa).

The disordered stretch occupies residues 1-90 (MDYNIFEAVH…STSSHAVVEA (90 aa)). Over residues 54–86 (SPPSSSSLPSSPAHSSSAGSSRASTSSSTSSHA) the composition is skewed to low complexity. Residues 98 to 235 (VSLSMSTTAT…QKFLNPEFNW (138 aa)) enclose the PX domain. Residues Arg-153, Ser-155, Lys-179, and Arg-202 each coordinate a 1,2-diacyl-sn-glycero-3-phospho-(1D-myo-inositol-3-phosphate). Coiled coils occupy residues 437-469 (QFKI…NESL) and 539-563 (QLTE…KDCL).

The protein belongs to the sorting nexin family. In terms of assembly, binds to SNX4.

Its subcellular location is the prevacuolar compartment. The protein localises to the endosome. The protein resides in the endosome membrane. Involved in proper sorting of the v-SNARE protein SNC1. The polypeptide is Sorting nexin-41 (SNX41) (Saccharomyces cerevisiae (strain ATCC 204508 / S288c) (Baker's yeast)).